The chain runs to 953 residues: Pyruvate, phosphate dikinase, chloroplastic (953 aa).

Residues 1–77 constitute a chloroplast transit peptide; sequence MMSSLSVEGM…VLNPVSPPVT (77 aa). The disordered stretch occupies residues 55-74; that stretch reads PELRSSGLTPPRAVLNPVSP. T533 carries the post-translational modification Phosphothreonine; by PDRP1. H535 functions as the Tele-phosphohistidine intermediate in the catalytic mechanism. R641, R698, E827, G848, T849, N850, and D851 together coordinate substrate. E827 provides a ligand contact to Mg(2+). D851 serves as a coordination point for Mg(2+). Catalysis depends on C913, which acts as the Proton donor.

Belongs to the PEP-utilizing enzyme family. In terms of assembly, homotetramer. It depends on Mg(2+) as a cofactor. Phosphorylation of Thr-533 in the dark inactivates the enzyme. Dephosphorylation upon light stimulation reactivates the enzyme. Isoform 1 mainly localized in mesophyll cells and only a low level is found in bundle sheath cells. Isoform 2 is expressed in roots and stems.

The protein resides in the plastid. It is found in the chloroplast. Its subcellular location is the cytoplasm. It catalyses the reaction pyruvate + phosphate + ATP = phosphoenolpyruvate + AMP + diphosphate + H(+). It functions in the pathway photosynthesis; C4 acid pathway. With respect to regulation, activated by light-induced dephosphorylation. Inhibited by dark-induced phosphorylation. Both reactions are catalyzed by PDRP1. Formation of phosphoenolpyruvate, which is the primary acceptor of CO(2) in C4 and some Crassulacean acid metabolism plants. The chain is Pyruvate, phosphate dikinase, chloroplastic (PPDK) from Flaveria trinervia (Clustered yellowtops).